Reading from the N-terminus, the 46-residue chain is Viscotoxin-C1 (46 aa).

3 cysteine pairs are disulfide-bonded: Cys3-Cys40, Cys4-Cys32, and Cys16-Cys26.

In terms of assembly, monomer.

Its subcellular location is the secreted. Functionally, thionins are small plant proteins which are toxic to animal cells. They seem to exert their toxic effect at the level of the cell membrane. Their precise function is not known. This is Viscotoxin-C1 from Viscum album (European mistletoe).